Here is a 345-residue protein sequence, read N- to C-terminus: 3-isopropylmalate dehydrogenase (345 aa).

Arginine 94, arginine 104, arginine 132, and aspartate 216 together coordinate substrate. Residues aspartate 216, aspartate 240, and aspartate 244 each contribute to the Mg(2+) site. 274–286 lines the NAD(+) pocket; the sequence is GSAPDIAGQGIAN.

This sequence belongs to the isocitrate and isopropylmalate dehydrogenases family. LeuB type 1 subfamily. Homodimer. The cofactor is Mg(2+). It depends on Mn(2+) as a cofactor.

It is found in the cytoplasm. It carries out the reaction (2R,3S)-3-isopropylmalate + NAD(+) = 4-methyl-2-oxopentanoate + CO2 + NADH. Its pathway is amino-acid biosynthesis; L-leucine biosynthesis; L-leucine from 3-methyl-2-oxobutanoate: step 3/4. Functionally, catalyzes the oxidation of 3-carboxy-2-hydroxy-4-methylpentanoate (3-isopropylmalate) to 3-carboxy-4-methyl-2-oxopentanoate. The product decarboxylates to 4-methyl-2 oxopentanoate. This Streptococcus pneumoniae (strain ATCC BAA-255 / R6) protein is 3-isopropylmalate dehydrogenase.